Consider the following 318-residue polypeptide: 1-aminocyclopropane-1-carboxylate oxidase 1 (318 aa).

Residues 153 to 254 enclose the Fe2OG dioxygenase domain; it reads PTFGTKVSNY…RMSIASFYNP (102 aa). 3 residues coordinate Fe cation: His177, Asp179, and His234.

This sequence belongs to the iron/ascorbate-dependent oxidoreductase family. Fe cation serves as cofactor. In terms of tissue distribution, fruit.

The catalysed reaction is 1-aminocyclopropane-1-carboxylate + L-ascorbate + O2 = ethene + L-dehydroascorbate + hydrogen cyanide + CO2 + 2 H2O. It participates in alkene biosynthesis; ethylene biosynthesis via S-adenosyl-L-methionine; ethylene from S-adenosyl-L-methionine: step 2/2. This is 1-aminocyclopropane-1-carboxylate oxidase 1 (ACO1) from Cucumis melo (Muskmelon).